Consider the following 215-residue polypeptide: Na(+)-translocating NADH-quinone reductase subunit D (215 aa).

The next 6 membrane-spanning stretches (helical) occupy residues 14–34 (PFIS…ALAV), 42–62 (FVMA…ISLI), 72–92 (IIVQ…LLKA), 103–123 (VFVG…AYAM), 131–151 (FLDG…VGTI), and 178–198 (NGML…IWVL).

This sequence belongs to the NqrDE/RnfAE family. Composed of six subunits; NqrA, NqrB, NqrC, NqrD, NqrE and NqrF.

It localises to the cell inner membrane. It carries out the reaction a ubiquinone + n Na(+)(in) + NADH + H(+) = a ubiquinol + n Na(+)(out) + NAD(+). In terms of biological role, NQR complex catalyzes the reduction of ubiquinone-1 to ubiquinol by two successive reactions, coupled with the transport of Na(+) ions from the cytoplasm to the periplasm. NqrA to NqrE are probably involved in the second step, the conversion of ubisemiquinone to ubiquinol. In Tolumonas auensis (strain DSM 9187 / NBRC 110442 / TA 4), this protein is Na(+)-translocating NADH-quinone reductase subunit D.